Reading from the N-terminus, the 320-residue chain is MQTRKTLSWIKEEITRSISVSLMIYIITGAYISNAYPIFAQQGYENPREATGRIVCANCHLANKPVGIEVPQAVLPDTVFEAVVRIPYDMQLKQVLANGKKGALNVGAVLILPEGFELAPPDRISPEMKEKIGNLSFQSYRPAKKNILVIGPVPGQKYSEITFPILSPDPAAKKDTHFLKYPIYVGGNRGRGQIYPDGSKSNNTVYNATAAGIVSKIIRKEKGGYEITITDAPEGRQVIDSIPPGPELLVSEGESIKLDQPLTSNPNVGGFGQGDAEIVLQDPLRVQGLLFFLASVILAQIFLVLKKKQFEKVQLSEMNF.

The N-terminal stretch at 1-35 (MQTRKTLSWIKEEITRSISVSLMIYIITGAYISNA) is a signal peptide. Heme contacts are provided by tyrosine 36, cysteine 56, cysteine 59, and histidine 60. A helical transmembrane segment spans residues 286–306 (VQGLLFFLASVILAQIFLVLK).

It belongs to the cytochrome f family. As to quaternary structure, the 4 large subunits of the cytochrome b6-f complex are cytochrome b6, subunit IV (17 kDa polypeptide, petD), cytochrome f and the Rieske protein, while the 4 small subunits are PetG, PetL, PetM and PetN. The complex functions as a dimer. Heme serves as cofactor.

The protein localises to the plastid. The protein resides in the chloroplast thylakoid membrane. Functionally, component of the cytochrome b6-f complex, which mediates electron transfer between photosystem II (PSII) and photosystem I (PSI), cyclic electron flow around PSI, and state transitions. This chain is Cytochrome f, found in Populus alba (White poplar).